Reading from the N-terminus, the 305-residue chain is Popeye domain-containing protein 3 (305 aa).

N-linked (GlcNAc...) asparagine glycosylation occurs at Asn-4. 3 helical membrane-spanning segments follow: residues 34 to 54 (SILFVVGFMGGSGFSGLLYVF), 55 to 75 (SLLGLGFLCSSVWAWLDVCAA), and 77 to 99 (IFSWNFILFAICFVQFIYVTYQV). Positions 273–305 (PETPPVPPPRRLQRRSSGRPRPGVPNCSSPRKQ) are disordered. N-linked (GlcNAc...) asparagine glycosylation occurs at Asn-298.

The protein belongs to the popeye family. As to expression, expressed first preferentially in atrium and later also in the subepicardial compact layer of the ventricles.

Its subcellular location is the membrane. May play a role in the maintenance of heart function mediated, at least in part, through cAMP-binding. May play a role in the regulation of KCNK2-mediated current amplitude. The sequence is that of Popeye domain-containing protein 3 (POPDC3) from Gallus gallus (Chicken).